We begin with the raw amino-acid sequence, 272 residues long: MVKTTEVVSEVSKVAGVRPWAGIFVVEIQEDILADEFTFEALMRTLPLASQARILNKKSFHDRCSNLCSQLLQLFGCSIVTGLNFQELKFDKGSFGKPFLDNNRFLPFSMTIGEQYVAMFLVKCVSTDEYQDVGIDIASPCNYGGREELELFKEVFSEREFNGLLKASDPCTIFTYLWSLKESYTKFTGTGLNTDLSLIDFGAISFFPAEGASMCITLDEVPLIFHSQWFNNEIVTICMPKSISDKINTNRPKLYNISLSTLIDYFIENDGL.

Belongs to the P-Pant transferase superfamily. AcpS family.

It catalyses the reaction apo-[ACP] + CoA = holo-[ACP] + adenosine 3',5'-bisphosphate + H(+). Its function is as follows. Catalyzes the transfer of a 4'-phosphopantetheine moiety from coenzyme A to a serine residue of acceptor proteins, such as alpha-aminoadipate reductase. Necessary for alpha-aminoadipate reductase activity. This Saccharomyces cerevisiae (strain ATCC 204508 / S288c) (Baker's yeast) protein is L-aminoadipate-semialdehyde dehydrogenase-phosphopantetheinyl transferase.